The following is a 392-amino-acid chain: Imidazolonepropionase (392 aa).

Fe(3+) contacts are provided by histidine 69 and histidine 71. Residues histidine 69 and histidine 71 each coordinate Zn(2+). Arginine 78, tyrosine 136, and histidine 163 together coordinate 4-imidazolone-5-propanoate. Tyrosine 136 is an N-formimidoyl-L-glutamate binding site. Histidine 226 contacts Fe(3+). Histidine 226 contributes to the Zn(2+) binding site. Glutamine 229 is a binding site for 4-imidazolone-5-propanoate. Aspartate 302 is a binding site for Fe(3+). Residue aspartate 302 coordinates Zn(2+). N-formimidoyl-L-glutamate-binding residues include asparagine 304 and glycine 306. A 4-imidazolone-5-propanoate-binding site is contributed by serine 307.

This sequence belongs to the metallo-dependent hydrolases superfamily. HutI family. The cofactor is Zn(2+). It depends on Fe(3+) as a cofactor.

It is found in the cytoplasm. It carries out the reaction 4-imidazolone-5-propanoate + H2O = N-formimidoyl-L-glutamate. It participates in amino-acid degradation; L-histidine degradation into L-glutamate; N-formimidoyl-L-glutamate from L-histidine: step 3/3. In terms of biological role, catalyzes the hydrolytic cleavage of the carbon-nitrogen bond in imidazolone-5-propanoate to yield N-formimidoyl-L-glutamate. It is the third step in the universal histidine degradation pathway. The polypeptide is Imidazolonepropionase (Salinispora arenicola (strain CNS-205)).